Reading from the N-terminus, the 509-residue chain is 2,3-bisphosphoglycerate-independent phosphoglycerate mutase (509 aa).

Aspartate 11 provides a ligand contact to Mn(2+). Tyrosine 35 is modified (phosphotyrosine). Position 61 (serine 61) interacts with Mn(2+). Serine 61 serves as the catalytic Phosphoserine intermediate. Residues histidine 122, 152 to 153 (RD), arginine 184, arginine 190, 260 to 263 (RPDR), and lysine 335 contribute to the substrate site. Positions 402, 406, 443, 444, and 461 each coordinate Mn(2+).

Belongs to the BPG-independent phosphoglycerate mutase family. In terms of assembly, monomer. Requires Mn(2+) as cofactor.

The enzyme catalyses (2R)-2-phosphoglycerate = (2R)-3-phosphoglycerate. It functions in the pathway carbohydrate degradation; glycolysis; pyruvate from D-glyceraldehyde 3-phosphate: step 3/5. Essential for rapid growth and for sporulation. Catalyzes the interconversion of 2-phosphoglycerate and 3-phosphoglycerate. The sequence is that of 2,3-bisphosphoglycerate-independent phosphoglycerate mutase from Bacillus cereus (strain ATCC 14579 / DSM 31 / CCUG 7414 / JCM 2152 / NBRC 15305 / NCIMB 9373 / NCTC 2599 / NRRL B-3711).